A 362-amino-acid chain; its full sequence is Methylthioribose-1-phosphate isomerase (362 aa).

Substrate-binding positions include arginine 49 to alanine 51, arginine 89, and glutamine 201. Aspartate 242 functions as the Proton donor in the catalytic mechanism. Asparagine 252–lysine 253 contributes to the substrate binding site.

This sequence belongs to the eIF-2B alpha/beta/delta subunits family. MtnA subfamily.

It carries out the reaction 5-(methylsulfanyl)-alpha-D-ribose 1-phosphate = 5-(methylsulfanyl)-D-ribulose 1-phosphate. It functions in the pathway amino-acid biosynthesis; L-methionine biosynthesis via salvage pathway; L-methionine from S-methyl-5-thio-alpha-D-ribose 1-phosphate: step 1/6. Catalyzes the interconversion of methylthioribose-1-phosphate (MTR-1-P) into methylthioribulose-1-phosphate (MTRu-1-P). The polypeptide is Methylthioribose-1-phosphate isomerase (Leptospira borgpetersenii serovar Hardjo-bovis (strain JB197)).